A 548-amino-acid polypeptide reads, in one-letter code: Luciferin 4-monooxygenase (548 aa).

The Microbody targeting signal signature appears at 546-548; that stretch reads AKM.

The protein belongs to the ATP-dependent AMP-binding enzyme family. Requires Mg(2+) as cofactor.

The protein localises to the peroxisome. The enzyme catalyses firefly D-luciferin + ATP + O2 = firefly oxyluciferin + hnu + AMP + CO2 + diphosphate. In terms of biological role, produces green light with a wavelength of 544 nm. This chain is Luciferin 4-monooxygenase, found in Nipponoluciola cruciata (Genji firefly).